The primary structure comprises 168 residues: Ribosome maturation factor RimP (168 aa).

Belongs to the RimP family.

The protein resides in the cytoplasm. In terms of biological role, required for maturation of 30S ribosomal subunits. The protein is Ribosome maturation factor RimP of Bordetella bronchiseptica (strain ATCC BAA-588 / NCTC 13252 / RB50) (Alcaligenes bronchisepticus).